Consider the following 90-residue polypeptide: Small ribosomal subunit protein uS17 (90 aa).

The protein belongs to the universal ribosomal protein uS17 family. In terms of assembly, part of the 30S ribosomal subunit.

One of the primary rRNA binding proteins, it binds specifically to the 5'-end of 16S ribosomal RNA. This Cutibacterium acnes (strain DSM 16379 / KPA171202) (Propionibacterium acnes) protein is Small ribosomal subunit protein uS17.